Here is a 417-residue protein sequence, read N- to C-terminus: Serine hydroxymethyltransferase (417 aa).

(6S)-5,6,7,8-tetrahydrofolate contacts are provided by residues Leu122 and 126-128 (GHL). The residue at position 230 (Lys230) is an N6-(pyridoxal phosphate)lysine. Position 355–357 (355–357 (SPF)) interacts with (6S)-5,6,7,8-tetrahydrofolate.

Belongs to the SHMT family. As to quaternary structure, homodimer. It depends on pyridoxal 5'-phosphate as a cofactor.

Its subcellular location is the cytoplasm. It catalyses the reaction (6R)-5,10-methylene-5,6,7,8-tetrahydrofolate + glycine + H2O = (6S)-5,6,7,8-tetrahydrofolate + L-serine. The protein operates within one-carbon metabolism; tetrahydrofolate interconversion. It participates in amino-acid biosynthesis; glycine biosynthesis; glycine from L-serine: step 1/1. Its function is as follows. Catalyzes the reversible interconversion of serine and glycine with tetrahydrofolate (THF) serving as the one-carbon carrier. This reaction serves as the major source of one-carbon groups required for the biosynthesis of purines, thymidylate, methionine, and other important biomolecules. Also exhibits THF-independent aldolase activity toward beta-hydroxyamino acids, producing glycine and aldehydes, via a retro-aldol mechanism. The sequence is that of Serine hydroxymethyltransferase from Francisella tularensis subsp. mediasiatica (strain FSC147).